The following is a 287-amino-acid chain: 1-acyl-sn-glycerol-3-phosphate acyltransferase alpha (287 aa).

The signal sequence occupies residues 1–26; sequence MELWPGAGTLLLLLFLLLLLLLPTLW. Residues 27–37 are Lumenal-facing; sequence FCSPSAKYFFK. A helical membrane pass occupies residues 38–58; the sequence is MAFYNGWILFLAVLAIPVCAV. Residues 59–127 lie on the Cytoplasmic side of the membrane; sequence RGRNVENMKI…PGHCVPIAKR (69 aa). The HXXXXD motif motif lies at 104-109; that stretch reads HQSSLD. Residues 128 to 148 form a helical membrane-spanning segment; sequence ELLWAGSAGLACWLAGVIFID. Residues 149-192 are Lumenal-facing; it reads RKRTGDAISVMSEVAQTLLTQDVRVWVFPEGTRNHNGSMLPFKR. The EGTR motif signature appears at 178–181; the sequence is EGTR.

The protein belongs to the 1-acyl-sn-glycerol-3-phosphate acyltransferase family.

It localises to the endoplasmic reticulum membrane. The catalysed reaction is a 1-acyl-sn-glycero-3-phosphate + an acyl-CoA = a 1,2-diacyl-sn-glycero-3-phosphate + CoA. The enzyme catalyses 1-(9Z-octadecenoyl)-sn-glycero-3-phosphate + (9Z)-octadecenoyl-CoA = 1,2-di-(9Z-octadecenoyl)-sn-glycero-3-phosphate + CoA. It carries out the reaction 1-(9Z-octadecenoyl)-sn-glycero-3-phosphate + hexadecanoyl-CoA = 1-(9Z)-octadecenoyl-2-hexadecanoyl-sn-glycero-3-phosphate + CoA. It catalyses the reaction heptadecanoyl-CoA + 1-(9Z-octadecenoyl)-sn-glycero-3-phosphate = 1-(9Z)-octadecenoyl-2-heptadecanoyl-sn-glycero-3-phosphate + CoA. The catalysed reaction is 1-(9Z-octadecenoyl)-sn-glycero-3-phosphate + octadecanoyl-CoA = 1-(9Z-octadecenoyl)-2-octadecanoyl-sn-glycero-3-phosphate + CoA. The enzyme catalyses 1-(9Z-octadecenoyl)-sn-glycero-3-phosphate + (9Z,12Z)-octadecadienoyl-CoA = 1-(9Z)-octadecenoyl-2-(9Z,12Z)-octadecadienoyl-sn-glycero-3-phosphate + CoA. It carries out the reaction 1-(9Z-octadecenoyl)-sn-glycero-3-phosphate + tetradecanoyl-CoA = 1-(9Z)-octadecenoyl-2-tetradecanoyl-sn-glycero-3-phosphate + CoA. It catalyses the reaction pentadecanoyl-CoA + 1-(9Z-octadecenoyl)-sn-glycero-3-phosphate = 1-(9Z)-octadecenoyl-2-pentadecanoyl-sn-glycero-3-phosphate + CoA. The catalysed reaction is 1-hexadecanoyl-sn-glycero-3-phosphate + (9Z)-octadecenoyl-CoA = 1-hexadecanoyl-2-(9Z-octadecenoyl)-sn-glycero-3-phosphate + CoA. The enzyme catalyses 1-(9Z,12Z,15Z)-octadecatrienoyl-sn-glycero-3-phosphate + (9Z)-octadecenoyl-CoA = 1-(9Z,12Z,15Z)-octadecatrienoyl-2-(9Z)-octadecenoyl-sn-glycero-3-phosphate + CoA. It carries out the reaction 1-(6Z,9Z,12Z-octadecatrienoyl)-sn-glycero-3-phosphate + (9Z)-octadecenoyl-CoA = (6Z,9Z,12Z)-octadecatrienoyl-2-(9Z)-octadecenoyl-sn-glycero-3-phosphate + CoA. It catalyses the reaction 1-eicosanoyl-sn-glycero-3-phosphate + (9Z)-octadecenoyl-CoA = 1-eicosanoyl-2-(9Z)-octadecenoyl-sn-glycero-3-phosphate + CoA. The catalysed reaction is 1-tetradecanoyl-sn-glycerol 3-phosphate + (9Z)-octadecenoyl-CoA = 1-tetradecanoyl-2-(9Z)-octadecenoyl-sn-glycero-3-phosphate + CoA. The enzyme catalyses 1-(9Z-octadecenoyl)-sn-glycero-3-phosphate + (5Z,8Z,11Z,14Z)-eicosatetraenoyl-CoA = 1-(9Z)-octadecenoyl-2-(5Z,8Z,11Z,14Z)-eicosatetraenoyl-sn-glycero-3-phosphate + CoA. It carries out the reaction 1-(9Z-octadecenoyl)-sn-glycero-3-phosphate + dodecanoyl-CoA = 1-(9Z)-octadecenoyl-2-dodecanoyl-sn-glycero-3-phosphate + CoA. It catalyses the reaction (6Z)-octadecenoyl-CoA + 1-(9Z-octadecenoyl)-sn-glycero-3-phosphate = 1-(9Z)-octadecenoyl-2-(6Z)-octadecenoyl-sn-glycero-3-phosphate + CoA. The catalysed reaction is (11Z)-octadecenoyl-CoA + 1-(9Z-octadecenoyl)-sn-glycero-3-phosphate = 1-(9Z)-octadecenoyl-2-(11Z)-octadecenoyl-sn-glycero-3-phosphate + CoA. The enzyme catalyses (9Z)-hexadecenoyl-CoA + 1-(9Z-octadecenoyl)-sn-glycero-3-phosphate = 1-(9Z-octadecenoyl)-2-(9Z-hexadecenoyl)-sn-glycero-3-phosphate + CoA. Its pathway is phospholipid metabolism; CDP-diacylglycerol biosynthesis; CDP-diacylglycerol from sn-glycerol 3-phosphate: step 2/3. Functionally, converts 1-acyl-sn-glycerol-3-phosphate (lysophosphatidic acid or LPA) into 1,2-diacyl-sn-glycerol-3-phosphate (phosphatidic acid or PA) by incorporating an acyl moiety at the sn-2 position of the glycerol backbone. This chain is 1-acyl-sn-glycerol-3-phosphate acyltransferase alpha (AGPAT1), found in Ovis aries (Sheep).